Consider the following 71-residue polypeptide: uncharacterized protein (71 aa).

The interval 1–71 (MLFETLKSLS…AFFSRPFYSE (71 aa)) is disordered. Residues 7 to 33 (KSLSQQNGGQFSDEQSFESPISSSFNG) show a composition bias toward polar residues. The span at 35-65 (SMPFGSPSSTMSSSYKGNTNSSTKSSSAFFS) shows a compositional bias: low complexity.

This is an uncharacterized protein from Dictyostelium discoideum (Social amoeba).